The following is a 336-amino-acid chain: Ankyrin repeat and SOCS box protein 1 (336 aa).

6 ANK repeats span residues 37–69 (CDDT…RINE), 78–107 (LPCT…EVDL), 111–140 (KGQT…DPNG), 144–173 (HRST…DVDV), 192–221 (LVVC…NPDF), and 236–266 (SPGC…NLNL). One can recognise an SOCS box domain in the interval 287–336 (LQVFKEARSIPRTLLSLCRVAVRRALGKYRLHLVPSLPLPDPIKKFLLYE).

The protein belongs to the ankyrin SOCS box (ASB) family. Interacts with CUL5 and RNF7. In terms of tissue distribution, highest expression in testis, spleen, bone marrow and salivary gland.

It functions in the pathway protein modification; protein ubiquitination. Probable substrate-recognition component of a SCF-like ECS (Elongin-Cullin-SOCS-box protein) E3 ligase complex which mediates the ubiquitination and subsequent proteasomal degradation of target proteins. Mediates Notch-induced ubiquitination and degradation of TCF3/E2A and JAK2. May play a role in testis development. The sequence is that of Ankyrin repeat and SOCS box protein 1 (Asb1) from Mus musculus (Mouse).